The chain runs to 202 residues: FMN-dependent NADH:quinone oxidoreductase (202 aa).

FMN is bound by residues Ser-12 and 21 to 23 (SFS).

The protein belongs to the azoreductase type 1 family. In terms of assembly, homodimer. The cofactor is FMN.

The enzyme catalyses 2 a quinone + NADH + H(+) = 2 a 1,4-benzosemiquinone + NAD(+). It carries out the reaction N,N-dimethyl-1,4-phenylenediamine + anthranilate + 2 NAD(+) = 2-(4-dimethylaminophenyl)diazenylbenzoate + 2 NADH + 2 H(+). Quinone reductase that provides resistance to thiol-specific stress caused by electrophilic quinones. In terms of biological role, also exhibits azoreductase activity. Catalyzes the reductive cleavage of the azo bond in aromatic azo compounds to the corresponding amines. The sequence is that of FMN-dependent NADH:quinone oxidoreductase from Mycoplasma mobile (strain ATCC 43663 / 163K / NCTC 11711) (Mesomycoplasma mobile).